The chain runs to 246 residues: Ribosome maturation factor RimM (246 aa).

The segment covering 1 to 15 (MKRKQESKGAGEKRQ) has biased composition (basic and acidic residues). Positions 1-63 (MKRKQESKGA…NPQFTTPNPD (63 aa)) are disordered. Residues 45–54 (VPSPQSPIPN) are compositionally biased toward pro residues. Residues 158-239 (GEDEYHVVDL…RIEITPPPGL (82 aa)) form the PRC barrel domain.

It belongs to the RimM family. In terms of assembly, binds ribosomal protein uS19.

It localises to the cytoplasm. Functionally, an accessory protein needed during the final step in the assembly of 30S ribosomal subunit, possibly for assembly of the head region. Essential for efficient processing of 16S rRNA. May be needed both before and after RbfA during the maturation of 16S rRNA. It has affinity for free ribosomal 30S subunits but not for 70S ribosomes. The chain is Ribosome maturation factor RimM from Nostoc sp. (strain PCC 7120 / SAG 25.82 / UTEX 2576).